We begin with the raw amino-acid sequence, 96 residues long: Small ribosomal subunit protein bS6 (96 aa).

This sequence belongs to the bacterial ribosomal protein bS6 family.

In terms of biological role, binds together with bS18 to 16S ribosomal RNA. In Beutenbergia cavernae (strain ATCC BAA-8 / DSM 12333 / CCUG 43141 / JCM 11478 / NBRC 16432 / NCIMB 13614 / HKI 0122), this protein is Small ribosomal subunit protein bS6.